A 276-amino-acid chain; its full sequence is MAADGIDERSPLISPSSGNVTPTAPPYLQQNNLQAELPPPYTAIASPDASGVPVINCRVCQSLINLDGKLHQHVVKCTVCNEATPIKTPPLGKKYVRCPCNCLLICKDISRRIGCPRPNCRRIINLGPVMLIPEEQPAQPALPVQPEGTRVVCGHCGNTFLWMELRFNTLAKCPHCKKMNCQVPRIQGKNGSAPGKAFRSSVGSALPRRRCCTYITMGMICIFIGVGLTVGTQDFARRFHATYVSWAVAYLVGLVCLIRACYWGAIKFSYPEHSFA.

Basic and acidic residues predominate over residues Met-1–Ser-10. The tract at residues Met-1–Tyr-27 is disordered. Residues Ile-13–Tyr-27 show a composition bias toward polar residues. Residue Cys-106 is part of the active site. Residues Cys-106–Arg-112 carry the CX5R motif motif. The next 2 helical transmembrane spans lie at Cys-211–Gly-231 and Trp-246–Ile-266.

Its subcellular location is the late endosome membrane. The protein resides in the lysosome membrane. The enzyme catalyses a 1,2-diacyl-sn-glycero-3-phospho-(1D-myo-inositol-4,5-bisphosphate) + H2O = a 1,2-diacyl-sn-glycero-3-phospho-(1D-myo-inositol-5-phosphate) + phosphate. Its function is as follows. Catalyzes the hydrolysis of phosphatidylinositol-4,5-bisphosphate (PtdIns-4,5-P2) to phosphatidylinositol-4-phosphate (PtdIns-4-P). The sequence is that of Type 2 phosphatidylinositol 4,5-bisphosphate 4-phosphatase (pip4p2) from Xenopus tropicalis (Western clawed frog).